The following is a 288-amino-acid chain: Rhox homeobox family member 2B (288 aa).

The disordered stretch occupies residues 16–136 (SPAVDDEKEL…GLEPGNAQQP (121 aa)). Residues 39–48 (VKEEEEDAQP) are compositionally biased toward acidic residues. Over residues 68 to 80 (GEEKDGGGEEKDG) the composition is skewed to basic and acidic residues. Residues 134–193 (QQPNVHAFTPLQLQELECIFQREQFPSEFLRRRLARSMNVTELAVQIWFENRRAKWRRHQ) constitute a DNA-binding region (homeobox). A Nuclear localization signal motif is present at residues 186-195 (RAKWRRHQRA).

Belongs to the paired-like homeobox family. PEPP subfamily. In terms of tissue distribution, expressed in testis, mainly expressed in germ cells, but also detected in somatic cells such as Sertoli cells, Leydig cells and peritubular cells.

Its subcellular location is the nucleus. Its function is as follows. Transcription factor maybe involved in reproductive processes. Modulates expression of target genes encoding proteins involved in processes relevant to spermatogenesis. In Homo sapiens (Human), this protein is Rhox homeobox family member 2B.